We begin with the raw amino-acid sequence, 115 residues long: Large ribosomal subunit protein uL22 (115 aa).

It belongs to the universal ribosomal protein uL22 family. Part of the 50S ribosomal subunit.

Its function is as follows. This protein binds specifically to 23S rRNA; its binding is stimulated by other ribosomal proteins, e.g. L4, L17, and L20. It is important during the early stages of 50S assembly. It makes multiple contacts with different domains of the 23S rRNA in the assembled 50S subunit and ribosome. Functionally, the globular domain of the protein is located near the polypeptide exit tunnel on the outside of the subunit, while an extended beta-hairpin is found that lines the wall of the exit tunnel in the center of the 70S ribosome. The chain is Large ribosomal subunit protein uL22 from Streptomyces griseus subsp. griseus (strain JCM 4626 / CBS 651.72 / NBRC 13350 / KCC S-0626 / ISP 5235).